Here is a 37-residue protein sequence, read N- to C-terminus: Chitinase-like protein (37 aa).

The tract at residues 1 to 20 is disordered; sequence VLLSVGGDADTESPEKKNLG. In terms of domain architecture, GH18 spans 1-37; the sequence is VLLSVGGDADTESPEKKNLGGVSIVDLSMDDFRGLLT.

It belongs to the glycosyl hydrolase 18 family. IDGF subfamily. In terms of processing, glycosylated.

The protein resides in the secreted. Its function is as follows. Cooperates with insulin-like peptides to stimulate the proliferation, polarization and motility of imaginal disk cells. May act by stabilizing the binding of insulin-like peptides to its receptor through a simultaneous interaction with both molecules to form a multiprotein signaling complex. This is Chitinase-like protein from Heliothis virescens (Tobacco budworm moth).